Here is a 1422-residue protein sequence, read N- to C-terminus: DNA-directed RNA polymerase subunit beta (1422 aa).

Positions 1392-1422 are disordered; sequence QAAREAAERDLGGGPLGAPRGAVASGEKSSA.

This sequence belongs to the RNA polymerase beta chain family. In terms of assembly, the RNAP catalytic core consists of 2 alpha, 1 beta, 1 beta' and 1 omega subunit. When a sigma factor is associated with the core the holoenzyme is formed, which can initiate transcription.

The catalysed reaction is RNA(n) + a ribonucleoside 5'-triphosphate = RNA(n+1) + diphosphate. DNA-dependent RNA polymerase catalyzes the transcription of DNA into RNA using the four ribonucleoside triphosphates as substrates. The polypeptide is DNA-directed RNA polymerase subunit beta (Anaeromyxobacter dehalogenans (strain 2CP-C)).